The primary structure comprises 4114 residues: Ferrichrome siderophore peptide synthetase (4114 aa).

4 Carrier domains span residues 797 to 874, 1947 to 2021, 3020 to 3093, and 3574 to 3650; these read DPAT…QSSG, TDSE…IDKL, TQSE…MQSS, and QALS…SQTN. O-(pantetheine 4'-phosphoryl)serine is present on residues S835, S1982, S3054, and S3611. The disordered stretch occupies residues 4040-4061; sequence LDYSHHSQHSTHDRTPPSTPHV. A compositionally biased stretch (basic and acidic residues) spans 4041 to 4054; that stretch reads DYSHHSQHSTHDRT.

It belongs to the ATP-dependent AMP-binding enzyme family. Requires pantetheine 4'-phosphate as cofactor.

It participates in siderophore biosynthesis; ferrichrome biosynthesis. Its function is as follows. Multidomain peptide synthetase involved in ferrichrome biosynthesis. This is Ferrichrome siderophore peptide synthetase (SID2) from Mycosarcoma maydis (Corn smut fungus).